The primary structure comprises 67 residues: MRMFKITACVPSQTRIRTQRELQNTYFTKLVPYENWFREQQRIQKMGGKIVKVELFTGKPGVNTGLA.

A CpcD-like domain is found at 1-56 (MRMFKITACVPSQTRIRTQRELQNTYFTKLVPYENWFREQQRIQKMGGKIVKVELF).

Belongs to the phycobilisome linker protein family.

It localises to the cellular thylakoid membrane. Rod linker protein, associated with allophycocyanin. Linker polypeptides determine the state of aggregation and the location of the disk-shaped phycobiliprotein units within the phycobilisome and modulate their spectroscopic properties in order to mediate a directed and optimal energy transfer. This Thermosynechococcus vestitus (strain NIES-2133 / IAM M-273 / BP-1) protein is Phycobilisome 7.8 kDa linker polypeptide, allophycocyanin-associated, core (apcC).